A 1034-amino-acid polypeptide reads, in one-letter code: AP-3 complex subunit delta (1034 aa).

HEAT repeat units lie at residues 35–72 (KYIS…LGYD), 143–180 (DLSR…RYPE), 181–217 (ALRP…KNPK), 219–255 (YLPL…LEPR), 258–297 (KKLI…GMPN), 299–337 (SASI…THPK), 338–374 (SVQA…KKNL), 376–414 (EIVK…LYVT), 415–452 (NFEW…RVPV), and 570–609 (NSAC…EIVQ). Disordered regions lie at residues 637 to 660 (DLDE…EHDK), 669 to 688 (QAGT…ELTP), 701 to 723 (EQSN…NADQ), and 758 to 1034 (QEQQ…KEIL). At S683 the chain carries Phosphoserine. T687 carries the post-translational modification Phosphothreonine. Residues 769-784 (GKKKHKKGKKSKKAKN) are compositionally biased toward basic residues. Composition is skewed to basic and acidic residues over residues 822 to 836 (KDGK…RALD) and 882 to 906 (KDKD…RKEA). Residues 928 to 942 (SATSNNNNTSTVLPD) show a composition bias toward low complexity. A compositionally biased stretch (basic residues) spans 986 to 1003 (KVHKKKHKKEKSQRKEKK). The segment covering 1007 to 1016 (ESASVSAIVS) has biased composition (low complexity). A compositionally biased stretch (polar residues) spans 1025–1034 (GISTPSKEIL).

Belongs to the adaptor complexes large subunit family. Adaptor protein complex 3 (AP-3) is a heterotetramer composed of two large chains (delta and beta3), a medium chain (mu3) and a small chain (sigma3).

Its subcellular location is the cytoplasmic vesicle. It localises to the clathrin-coated vesicle membrane. It is found in the golgi apparatus. Part of the AP-3 complex, an adapter-related complex which is not clathrin-associated. The complex is associated with the Golgi region as well as more peripheral structures. It facilitates the budding of vesicles from the Golgi membrane and may be directly involved in trafficking to lysosomes. Functionally, may be a coat protein involved in the formation of specialized structures like pigment granules. This Drosophila melanogaster (Fruit fly) protein is AP-3 complex subunit delta (g).